Reading from the N-terminus, the 330-residue chain is Glycerol-3-phosphate dehydrogenase [NAD(P)+] (330 aa).

NADPH-binding residues include Ser-11, Phe-12, Arg-32, and Lys-106. Residues Lys-106, Gly-133, and Ser-135 each contribute to the sn-glycerol 3-phosphate site. Ala-137 is an NADPH binding site. Lys-188, Asp-241, Ser-251, Arg-252, and Asn-253 together coordinate sn-glycerol 3-phosphate. Catalysis depends on Lys-188, which acts as the Proton acceptor. Arg-252 is an NADPH binding site. NADPH-binding residues include Val-276 and Glu-278.

This sequence belongs to the NAD-dependent glycerol-3-phosphate dehydrogenase family.

The protein resides in the cytoplasm. The catalysed reaction is sn-glycerol 3-phosphate + NAD(+) = dihydroxyacetone phosphate + NADH + H(+). The enzyme catalyses sn-glycerol 3-phosphate + NADP(+) = dihydroxyacetone phosphate + NADPH + H(+). Its pathway is membrane lipid metabolism; glycerophospholipid metabolism. In terms of biological role, catalyzes the reduction of the glycolytic intermediate dihydroxyacetone phosphate (DHAP) to sn-glycerol 3-phosphate (G3P), the key precursor for phospholipid synthesis. This is Glycerol-3-phosphate dehydrogenase [NAD(P)+] from Clostridium botulinum (strain Alaska E43 / Type E3).